A 410-amino-acid chain; its full sequence is Provicilin (410 aa).

Positions Met1–Ser15 are cleaved as a signal peptide. The region spanning Phe23–Glu181 is the Cupin type-1 1 domain. 2 disordered regions span residues Ser223–Asn242 and Gln312–Thr331. Residues Asn225–Ser238 are compositionally biased toward low complexity. The 169-residue stretch at Phe241–Asp409 folds into the Cupin type-1 2 domain. Asn359 carries N-linked (GlcNAc...) asparagine glycosylation.

Belongs to the 7S seed storage protein family.

The protein resides in the vacuole. It is found in the aleurone grain. In terms of biological role, seed storage protein. In Pisum sativum (Garden pea), this protein is Provicilin.